The chain runs to 308 residues: tRNA dimethylallyltransferase (308 aa).

8-15 is an ATP binding site; that stretch reads GATAVGKT. 10-15 contributes to the substrate binding site; sequence TAVGKT. Positions 33 to 36 are interaction with substrate tRNA; sequence DSRQ.

It belongs to the IPP transferase family. In terms of assembly, monomer. The cofactor is Mg(2+).

The enzyme catalyses adenosine(37) in tRNA + dimethylallyl diphosphate = N(6)-dimethylallyladenosine(37) in tRNA + diphosphate. Catalyzes the transfer of a dimethylallyl group onto the adenine at position 37 in tRNAs that read codons beginning with uridine, leading to the formation of N6-(dimethylallyl)adenosine (i(6)A). The sequence is that of tRNA dimethylallyltransferase from Kosmotoga olearia (strain ATCC BAA-1733 / DSM 21960 / TBF 19.5.1).